We begin with the raw amino-acid sequence, 333 residues long: Heat shock transcription factor, X-linked member 3 (333 aa).

Residues 1–66 are disordered; that stretch reads MASQNTEQEY…QDNSPPEDRN (66 aa). Positions 29 to 39 are enriched in low complexity; the sequence is GSSPDPNPDSS. Polar residues predominate over residues 49 to 60; it reads AMSQDPGSQDNS. The DNA-binding element occupies 79–182; that stretch reads FRLSFPRKLW…PRLLENIQRK (104 aa). Residues 227–275 are disordered; the sequence is QGAPSVQGPSGTQSFRRSGMWSKKSATRHPLGNGPPQEPNGPSWEGTSG. Residues 228 to 242 are compositionally biased toward polar residues; that stretch reads GAPSVQGPSGTQSFR.

The protein belongs to the HSF family.

It localises to the nucleus. This Homo sapiens (Human) protein is Heat shock transcription factor, X-linked member 3.